The primary structure comprises 340 residues: Probable HTH-type transcriptional regulator EndR (340 aa).

An HTH lacI-type domain is found at methionine 1–glutamine 58. The H-T-H motif DNA-binding region spans methionine 5 to glutamine 24.

Putative repressor of the endoglucanase operon. In Paenibacillus polymyxa (Bacillus polymyxa), this protein is Probable HTH-type transcriptional regulator EndR (endR).